We begin with the raw amino-acid sequence, 417 residues long: Senescence-associated protein AAF, chloroplastic (417 aa).

Residues 1–36 (MALNVSKVVPNSPILVKSVNASRSRRVLLAYVHHPL) constitute a chloroplast transit peptide.

The protein belongs to the ATA15/OSA15 family. Expressed in leaves. Expressed in 7-day-old seedlings, roots, rosette leaves, cauline leaves and flower buds.

It is found in the plastid. The protein resides in the chloroplast. Involved in modulation of redox homeostasis to regulate leaf senescence mediated by age and stress factors during plant development. Its function is dependent of EIN2, a central factor of ethylene signaling. The sequence is that of Senescence-associated protein AAF, chloroplastic from Arabidopsis thaliana (Mouse-ear cress).